The sequence spans 266 residues: 3-methyl-2-oxobutanoate hydroxymethyltransferase (266 aa).

Mg(2+)-binding residues include Asp-45 and Asp-84. Residues 45-46 (DS), Asp-84, and Lys-112 contribute to the 3-methyl-2-oxobutanoate site. Glu-114 contributes to the Mg(2+) binding site. The Proton acceptor role is filled by Glu-181.

The protein belongs to the PanB family. In terms of assembly, homodecamer; pentamer of dimers. The cofactor is Mg(2+).

The protein localises to the cytoplasm. The catalysed reaction is 3-methyl-2-oxobutanoate + (6R)-5,10-methylene-5,6,7,8-tetrahydrofolate + H2O = 2-dehydropantoate + (6S)-5,6,7,8-tetrahydrofolate. It functions in the pathway cofactor biosynthesis; (R)-pantothenate biosynthesis; (R)-pantoate from 3-methyl-2-oxobutanoate: step 1/2. In terms of biological role, catalyzes the reversible reaction in which hydroxymethyl group from 5,10-methylenetetrahydrofolate is transferred onto alpha-ketoisovalerate to form ketopantoate. The chain is 3-methyl-2-oxobutanoate hydroxymethyltransferase from Pseudomonas syringae pv. syringae (strain B728a).